Reading from the N-terminus, the 425-residue chain is MTTAPHPAADGIWEHLRLMPGALADDSPVATNTEAAIVVTEGRIRWIGASAALPAGFSALPRFDGGGALVTPGLVDCHTHLVYGGQRANEFAMRLAGASYEEVAKAGGGIVSSVRATRAAGEDELFAQAAPRLEQLLADGVCAIEIKSGYGLALEHERKQLRVARRLGEAYGVTVRTTFLGAHALPPEYAGRSQDYIDLVCREMLPALAAEGLVDAVDVFCERIAFSLSETEQVFQAAQRLGLPVKLHAEQLSDMGGAALAARYGALSCDHIEHLSQAGIDAMRAAGTVAVLLPGAYYTLRDTHLPPIAALREAGVPMAVSTDHNPGTSPALSLLLMANMACTLFRLTVPEALAGITRHAARALGLQDTHGALGVGRPANFVLWQLNDSAELAYWLGQQAPRTIVRQGRVALDGLQIAPNARITP.

The Fe(3+) site is built by His-78 and His-80. The Zn(2+) site is built by His-78 and His-80. Arg-87, Tyr-150, and His-183 together coordinate 4-imidazolone-5-propanoate. An N-formimidoyl-L-glutamate-binding site is contributed by Tyr-150. His-248 contributes to the Fe(3+) binding site. His-248 serves as a coordination point for Zn(2+). Gln-251 provides a ligand contact to 4-imidazolone-5-propanoate. Asp-323 is a binding site for Fe(3+). Asp-323 lines the Zn(2+) pocket. Asn-325 and Gly-327 together coordinate N-formimidoyl-L-glutamate. Residue Thr-328 coordinates 4-imidazolone-5-propanoate.

Belongs to the metallo-dependent hydrolases superfamily. HutI family. It depends on Zn(2+) as a cofactor. Requires Fe(3+) as cofactor.

It is found in the cytoplasm. It carries out the reaction 4-imidazolone-5-propanoate + H2O = N-formimidoyl-L-glutamate. The protein operates within amino-acid degradation; L-histidine degradation into L-glutamate; N-formimidoyl-L-glutamate from L-histidine: step 3/3. Functionally, catalyzes the hydrolytic cleavage of the carbon-nitrogen bond in imidazolone-5-propanoate to yield N-formimidoyl-L-glutamate. It is the third step in the universal histidine degradation pathway. The polypeptide is Imidazolonepropionase (Polaromonas sp. (strain JS666 / ATCC BAA-500)).